The following is a 300-amino-acid chain: Acetylglutamate kinase (300 aa).

Substrate-binding positions include 73–74, R95, and N197; that span reads GG.

This sequence belongs to the acetylglutamate kinase family. ArgB subfamily.

Its subcellular location is the cytoplasm. The enzyme catalyses N-acetyl-L-glutamate + ATP = N-acetyl-L-glutamyl 5-phosphate + ADP. The protein operates within amino-acid biosynthesis; L-arginine biosynthesis; N(2)-acetyl-L-ornithine from L-glutamate: step 2/4. Functionally, catalyzes the ATP-dependent phosphorylation of N-acetyl-L-glutamate. The sequence is that of Acetylglutamate kinase from Polynucleobacter asymbioticus (strain DSM 18221 / CIP 109841 / QLW-P1DMWA-1) (Polynucleobacter necessarius subsp. asymbioticus).